The chain runs to 285 residues: Bifunctional protein FolD (285 aa).

NADP(+) contacts are provided by residues 163-165 and S188; that span reads GRS.

Belongs to the tetrahydrofolate dehydrogenase/cyclohydrolase family. Homodimer.

The enzyme catalyses (6R)-5,10-methylene-5,6,7,8-tetrahydrofolate + NADP(+) = (6R)-5,10-methenyltetrahydrofolate + NADPH. It catalyses the reaction (6R)-5,10-methenyltetrahydrofolate + H2O = (6R)-10-formyltetrahydrofolate + H(+). The protein operates within one-carbon metabolism; tetrahydrofolate interconversion. Its function is as follows. Catalyzes the oxidation of 5,10-methylenetetrahydrofolate to 5,10-methenyltetrahydrofolate and then the hydrolysis of 5,10-methenyltetrahydrofolate to 10-formyltetrahydrofolate. This chain is Bifunctional protein FolD, found in Lactococcus lactis subsp. cremoris (strain MG1363).